A 331-amino-acid polypeptide reads, in one-letter code: UDP-N-acetylenolpyruvoylglucosamine reductase (331 aa).

An FAD-binding PCMH-type domain is found at 54 to 221; it reads RVGGAAELYV…TQATFQLQPG (168 aa). The active site involves Arg-200. Ser-251 serves as the catalytic Proton donor. Residue Glu-321 is part of the active site.

It belongs to the MurB family. FAD serves as cofactor.

The protein localises to the cytoplasm. It carries out the reaction UDP-N-acetyl-alpha-D-muramate + NADP(+) = UDP-N-acetyl-3-O-(1-carboxyvinyl)-alpha-D-glucosamine + NADPH + H(+). Its pathway is cell wall biogenesis; peptidoglycan biosynthesis. In terms of biological role, cell wall formation. This Trichormus variabilis (strain ATCC 29413 / PCC 7937) (Anabaena variabilis) protein is UDP-N-acetylenolpyruvoylglucosamine reductase.